Consider the following 196-residue polypeptide: Ras-related protein RabC (196 aa).

13–20 (GESGVGKS) is a binding site for GTP. Residues 35–43 (FAPTLGVDF) carry the Effector region motif. Residues 63 to 67 (DTAGQ) and 121 to 124 (NKSD) each bind GTP. Residues C195 and C196 are each lipidated (S-geranylgeranyl cysteine).

Belongs to the small GTPase superfamily. Rab family.

It localises to the cell membrane. In Dictyostelium discoideum (Social amoeba), this protein is Ras-related protein RabC (rabC).